Consider the following 150-residue polypeptide: Large ribosomal subunit protein bL9 (150 aa).

This sequence belongs to the bacterial ribosomal protein bL9 family.

Functionally, binds to the 23S rRNA. In Streptococcus pyogenes serotype M6 (strain ATCC BAA-946 / MGAS10394), this protein is Large ribosomal subunit protein bL9.